Consider the following 466-residue polypeptide: Argininosuccinate lyase (466 aa).

This sequence belongs to the lyase 1 family. Argininosuccinate lyase subfamily.

Its subcellular location is the cytoplasm. The enzyme catalyses 2-(N(omega)-L-arginino)succinate = fumarate + L-arginine. Its pathway is amino-acid biosynthesis; L-arginine biosynthesis; L-arginine from L-ornithine and carbamoyl phosphate: step 3/3. The polypeptide is Argininosuccinate lyase (Bartonella tribocorum (strain CIP 105476 / IBS 506)).